Reading from the N-terminus, the 160-residue chain is Cytochrome b6-f complex subunit 4 (160 aa).

Transmembrane regions (helical) follow at residues 36–56, 95–115, and 131–151; these read LLYI…GLAV, LLGV…PFLE, and TVFL…TLPI.

This sequence belongs to the cytochrome b family. PetD subfamily. As to quaternary structure, the 4 large subunits of the cytochrome b6-f complex are cytochrome b6, subunit IV (17 kDa polypeptide, petD), cytochrome f and the Rieske protein, while the 4 small subunits are petG, petL, petM and petN. The complex functions as a dimer.

Its subcellular location is the plastid. The protein localises to the chloroplast thylakoid membrane. Its function is as follows. Component of the cytochrome b6-f complex, which mediates electron transfer between photosystem II (PSII) and photosystem I (PSI), cyclic electron flow around PSI, and state transitions. In Amborella trichopoda, this protein is Cytochrome b6-f complex subunit 4.